The chain runs to 357 residues: Methylthioribose-1-phosphate isomerase (357 aa).

Residues Arg49 to Ala51, Arg89, and Gln197 each bind substrate. The active-site Proton donor is the Asp238. Residue Asn248–Lys249 coordinates substrate.

This sequence belongs to the eIF-2B alpha/beta/delta subunits family. MtnA subfamily.

The enzyme catalyses 5-(methylsulfanyl)-alpha-D-ribose 1-phosphate = 5-(methylsulfanyl)-D-ribulose 1-phosphate. It functions in the pathway amino-acid biosynthesis; L-methionine biosynthesis via salvage pathway; L-methionine from S-methyl-5-thio-alpha-D-ribose 1-phosphate: step 1/6. Its function is as follows. Catalyzes the interconversion of methylthioribose-1-phosphate (MTR-1-P) into methylthioribulose-1-phosphate (MTRu-1-P). This Leptospira biflexa serovar Patoc (strain Patoc 1 / Ames) protein is Methylthioribose-1-phosphate isomerase.